The following is a 610-amino-acid chain: Sterol O-acyltransferase 1 (610 aa).

Ser-21 and Ser-45 each carry phosphoserine. The interval 41 to 81 (SMEVSPRSSTTSLVEPVESTEGVESTEAERVAGKQEQEEEY) is disordered. Residues 67 to 76 (EAERVAGKQE) are compositionally biased toward basic and acidic residues. 5 helical membrane-spanning segments follow: residues 182–202 (LESN…WIAI), 229–249 (LFTI…VVFV), 264–284 (GFVA…PIYV), 371–391 (ISCS…QINY), and 409–429 (IIGT…PVAM). The FYXDWWN motif motif lies at 491–497 (FYGDWWN). Helical transmembrane passes span 535–555 (ATLF…FAIF) and 590–610 (VVFS…YLTL). Residue His-547 is part of the active site.

This sequence belongs to the membrane-bound acyltransferase family. Sterol o-acyltransferase subfamily.

It localises to the endoplasmic reticulum membrane. It carries out the reaction lanosterol + an acyl-CoA = lanosteryl ester + CoA. Its function is as follows. Sterol O-acyltransferase that catalyzes the formation of stery esters. The protein is Sterol O-acyltransferase 1 of Saccharomyces cerevisiae (strain ATCC 204508 / S288c) (Baker's yeast).